Here is a 102-residue protein sequence, read N- to C-terminus: uncharacterized protein (102 aa).

A disordered region spans residues 1–71; sequence MKRMIRSHGR…GSANETSACT (71 aa). The Extracellular portion of the chain corresponds to 1-79; that stretch reads MKRMIRSHGR…CTRTDHQKAD (79 aa). The segment covering 56-71 has biased composition (polar residues); the sequence is SSGTRRGSANETSACT. N-linked (GlcNAc...) asparagine; by host glycosylation is present at Asn-65. The helical transmembrane segment at 80-97 threads the bilayer; it reads IGLWFMFLVFGLCSWLAM. Over 98-102 the chain is Cytoplasmic; it reads RYRAQ.

This sequence belongs to the HHV-5 UL15A protein family.

It localises to the host membrane. This is an uncharacterized protein from Human cytomegalovirus (strain AD169) (HHV-5).